The following is a 182-amino-acid chain: Inosine/xanthosine triphosphatase (182 aa).

This sequence belongs to the YjjX NTPase family. As to quaternary structure, homodimer. Requires Mg(2+) as cofactor. Mn(2+) serves as cofactor.

The enzyme catalyses XTP + H2O = XDP + phosphate + H(+). It catalyses the reaction ITP + H2O = IDP + phosphate + H(+). In terms of biological role, phosphatase that hydrolyzes non-canonical purine nucleotides such as XTP and ITP to their respective diphosphate derivatives. Probably excludes non-canonical purines from DNA/RNA precursor pool, thus preventing their incorporation into DNA/RNA and avoiding chromosomal lesions. In Vibrio parahaemolyticus serotype O3:K6 (strain RIMD 2210633), this protein is Inosine/xanthosine triphosphatase.